Reading from the N-terminus, the 754-residue chain is 5-methyltetrahydropteroyltriglutamate--homocysteine methyltransferase (754 aa).

Residues 17–20 (RELK) and Lys-117 contribute to the 5-methyltetrahydropteroyltri-L-glutamate site. L-homocysteine contacts are provided by residues 431–433 (IGS) and Glu-484. L-methionine contacts are provided by residues 431–433 (IGS) and Glu-484. 5-methyltetrahydropteroyltri-L-glutamate-binding positions include 515-516 (RC) and Trp-561. Residue Asp-599 participates in L-homocysteine binding. Asp-599 is a binding site for L-methionine. A 5-methyltetrahydropteroyltri-L-glutamate-binding site is contributed by Glu-605. His-641, Cys-643, and Glu-665 together coordinate Zn(2+). The Proton donor role is filled by His-694. Cys-726 lines the Zn(2+) pocket.

The protein belongs to the vitamin-B12 independent methionine synthase family. It depends on Zn(2+) as a cofactor.

The enzyme catalyses 5-methyltetrahydropteroyltri-L-glutamate + L-homocysteine = tetrahydropteroyltri-L-glutamate + L-methionine. Its pathway is amino-acid biosynthesis; L-methionine biosynthesis via de novo pathway; L-methionine from L-homocysteine (MetE route): step 1/1. In terms of biological role, catalyzes the transfer of a methyl group from 5-methyltetrahydrofolate to homocysteine resulting in methionine formation. The chain is 5-methyltetrahydropteroyltriglutamate--homocysteine methyltransferase from Salmonella dublin (strain CT_02021853).